The primary structure comprises 261 residues: MVQTNLEVVDDTLHLPRILCLHGGGSNAAIFQAQCRRLIAQLRSEFRFVFAQAPFLSDAEPNVMSVYSQWGPFRRWLRWCPDHPEIRPEDAIRAIDDCLEDVKRQDDAKGATGAWVGLLGFSQGAKMCASLLYRQQIRQELRGRSFAGSDYRFGVLLAGRAPLVSLDPDLDLNSSLPDVSQITDAKYHGPSQDVLRIPTVHVHGMRDPHVDLHRQLFEEFCAPESRRLVEWDGDHRVPLKYNDVSLVAYQIRELATQTGAP.

Catalysis depends on charge relay system residues serine 122, aspartate 207, and histidine 235.

It belongs to the LovG family.

It functions in the pathway mycotoxin biosynthesis. Non-reducing polyketide synthase; part of the gene cluster that mediates the biosynthesis of the mycotoxin citrinin, a hepato-nephrotoxic compound to humans due to inhibition of respiration complex III. The pathway begins with the synthesis of a keto-aldehyde intermediate by the citrinin PKS (pksCT also named citS) from successive condensations of 4 malonyl-CoA units, presumably with a simple acetyl-CoA starter unit. Release of the keto-aldehyde intermediate is consistent with the presence of the C-terminal reductive release domain. CitA collaborates with citS by catalyzing the hydrolysis of ACP-bound acyl intermediates to free the ACP from stalled intermediates. CitB then catalyzes the oxidation of the C-12 methyl of the ketone intermediate to an alcohol intermediate which is further oxidized by the oxidoreductase citC to produce a bisaldehyde intermediate. The fourth catalytic step is catalyzed by the citD aldehyde dehydrogenase. The final transformation is the reduction of C-3 by citE to provide the chemically stable citrinin nucleus. CitE appears highly selective for its substrate as its presence in any context other than a full complement of citS and citA-D does not result in observable new compounds. This chain is Esterase citA, found in Monascus ruber (Mold).